A 763-amino-acid polypeptide reads, in one-letter code: Phosphoglycerol transferase I (763 aa).

The next 4 helical transmembrane spans lie at 1–21, 26–46, 77–97, and 108–128; these read MSELLSFALFLASVLIYAWKA, WWFAATLTVLGLFVVLNITLF, ILPGIGIVLGLTAVFGALGWI, and FGYSLLALLLALGSVDASPAF.

This sequence belongs to the OpgB family.

It is found in the cell inner membrane. The enzyme catalyses a phosphatidylglycerol + a membrane-derived-oligosaccharide D-glucose = a 1,2-diacyl-sn-glycerol + a membrane-derived-oligosaccharide 6-(glycerophospho)-D-glucose.. Its pathway is glycan metabolism; osmoregulated periplasmic glucan (OPG) biosynthesis. Transfers a phosphoglycerol residue from phosphatidylglycerol to the membrane-bound nascent glucan backbones. In Shigella boydii serotype 18 (strain CDC 3083-94 / BS512), this protein is Phosphoglycerol transferase I.